The primary structure comprises 225 residues: MTIPSFAIGIAGGTGAGKTTVAREITDNVGESATLIPLDNYYEDLSDRPFEERANANYDHPSAFEWELLRTHIDALLSGQSIEMPQYDFERHVRKADRVVVEPTDVIVLEGILALSDETVNDMLDLHIYVETDADVRILRRIERDVVERGRELEGVMDQYLSTVKPMHEQFIEPTKRHADIIIPEGANSVAVNLLEEKVQAETSEMTAWAARDDTAFEDATYNPQ.

ATP is bound at residue 12-19 (GGTGAGKT).

It belongs to the uridine kinase family.

Its subcellular location is the cytoplasm. The catalysed reaction is uridine + ATP = UMP + ADP + H(+). The enzyme catalyses cytidine + ATP = CMP + ADP + H(+). It functions in the pathway pyrimidine metabolism; CTP biosynthesis via salvage pathway; CTP from cytidine: step 1/3. The protein operates within pyrimidine metabolism; UMP biosynthesis via salvage pathway; UMP from uridine: step 1/1. The polypeptide is Uridine kinase (Halobacterium salinarum (strain ATCC 700922 / JCM 11081 / NRC-1) (Halobacterium halobium)).